The following is a 241-amino-acid chain: Probable transcriptional regulatory protein CV_3123 (241 aa).

The protein belongs to the TACO1 family.

It is found in the cytoplasm. The sequence is that of Probable transcriptional regulatory protein CV_3123 from Chromobacterium violaceum (strain ATCC 12472 / DSM 30191 / JCM 1249 / CCUG 213 / NBRC 12614 / NCIMB 9131 / NCTC 9757 / MK).